The sequence spans 439 residues: UDP-N-acetylglucosamine--N-acetylmuramyl-(pentapeptide) pyrophosphoryl-undecaprenol N-acetylglucosamine transferase (439 aa).

UDP-N-acetyl-alpha-D-glucosamine-binding positions include 25-27 (TGG), arginine 218, serine 248, and glutamine 362.

The protein belongs to the glycosyltransferase 28 family. MurG subfamily.

The protein resides in the cell membrane. It carries out the reaction di-trans,octa-cis-undecaprenyl diphospho-N-acetyl-alpha-D-muramoyl-L-alanyl-D-glutamyl-meso-2,6-diaminopimeloyl-D-alanyl-D-alanine + UDP-N-acetyl-alpha-D-glucosamine = di-trans,octa-cis-undecaprenyl diphospho-[N-acetyl-alpha-D-glucosaminyl-(1-&gt;4)]-N-acetyl-alpha-D-muramoyl-L-alanyl-D-glutamyl-meso-2,6-diaminopimeloyl-D-alanyl-D-alanine + UDP + H(+). It participates in cell wall biogenesis; peptidoglycan biosynthesis. Cell wall formation. Catalyzes the transfer of a GlcNAc subunit on undecaprenyl-pyrophosphoryl-MurNAc-pentapeptide (lipid intermediate I) to form undecaprenyl-pyrophosphoryl-MurNAc-(pentapeptide)GlcNAc (lipid intermediate II). In Roseiflexus sp. (strain RS-1), this protein is UDP-N-acetylglucosamine--N-acetylmuramyl-(pentapeptide) pyrophosphoryl-undecaprenol N-acetylglucosamine transferase.